A 207-amino-acid chain; its full sequence is MARYIGPKAKLSRREGTDLFLKSARRSLADKCKLDSKPGQHGRTSGARTSDYGTQLREKQKVKRIYGVLERQFRRYFAEADRRKGNTGENLLQLLESRLDNVVYRMGFGSTRAEARQLVSHKSITVNGVVANVPSQQVKAGDIVAIREKAKKQARIVEALSLAEQGGMPSWVAVDAKKFEGTFKQMPERADIAGDINESLIVELYSR.

Residues 31–55 are disordered; it reads KCKLDSKPGQHGRTSGARTSDYGTQ. Residues 42–53 are compositionally biased toward polar residues; it reads GRTSGARTSDYG. An S4 RNA-binding domain is found at 97–160; that stretch reads SRLDNVVYRM…KKQARIVEAL (64 aa).

It belongs to the universal ribosomal protein uS4 family. In terms of assembly, part of the 30S ribosomal subunit. Contacts protein S5. The interaction surface between S4 and S5 is involved in control of translational fidelity.

One of the primary rRNA binding proteins, it binds directly to 16S rRNA where it nucleates assembly of the body of the 30S subunit. Functionally, with S5 and S12 plays an important role in translational accuracy. The polypeptide is Small ribosomal subunit protein uS4 (Burkholderia ambifaria (strain ATCC BAA-244 / DSM 16087 / CCUG 44356 / LMG 19182 / AMMD) (Burkholderia cepacia (strain AMMD))).